The sequence spans 177 residues: Large ribosomal subunit protein uL6 (177 aa).

This sequence belongs to the universal ribosomal protein uL6 family. As to quaternary structure, part of the 50S ribosomal subunit.

In terms of biological role, this protein binds to the 23S rRNA, and is important in its secondary structure. It is located near the subunit interface in the base of the L7/L12 stalk, and near the tRNA binding site of the peptidyltransferase center. The sequence is that of Large ribosomal subunit protein uL6 from Rhizobium leguminosarum bv. trifolii (strain WSM2304).